The sequence spans 343 residues: L-threonine 3-dehydrogenase (343 aa).

Cysteine 40 contributes to the Zn(2+) binding site. Active-site charge relay system residues include threonine 42 and histidine 45. Residues histidine 65, glutamate 66, cysteine 95, cysteine 98, cysteine 101, and cysteine 109 each coordinate Zn(2+). NAD(+) contacts are provided by residues isoleucine 177, aspartate 197, arginine 202, 264–266, and 288–289; these read LGI and IY.

It belongs to the zinc-containing alcohol dehydrogenase family. In terms of assembly, homotetramer. It depends on Zn(2+) as a cofactor.

The protein resides in the cytoplasm. It carries out the reaction L-threonine + NAD(+) = (2S)-2-amino-3-oxobutanoate + NADH + H(+). It functions in the pathway amino-acid degradation; L-threonine degradation via oxydo-reductase pathway; glycine from L-threonine: step 1/2. In terms of biological role, catalyzes the NAD(+)-dependent oxidation of L-threonine to 2-amino-3-ketobutyrate. This is L-threonine 3-dehydrogenase from Aliivibrio salmonicida (strain LFI1238) (Vibrio salmonicida (strain LFI1238)).